The chain runs to 380 residues: Erythronate-4-phosphate dehydrogenase (380 aa).

S45 and T66 together coordinate substrate. NAD(+) is bound by residues 126–127, D146, T174, 205–207, and D231; these read QV and ASR. R207 is a catalytic residue. E236 is a catalytic residue. H253 serves as the catalytic Proton donor. Position 256 (G256) interacts with NAD(+). Y257 serves as a coordination point for substrate.

Belongs to the D-isomer specific 2-hydroxyacid dehydrogenase family. PdxB subfamily. As to quaternary structure, homodimer.

It localises to the cytoplasm. It carries out the reaction 4-phospho-D-erythronate + NAD(+) = (R)-3-hydroxy-2-oxo-4-phosphooxybutanoate + NADH + H(+). The protein operates within cofactor biosynthesis; pyridoxine 5'-phosphate biosynthesis; pyridoxine 5'-phosphate from D-erythrose 4-phosphate: step 2/5. Its function is as follows. Catalyzes the oxidation of erythronate-4-phosphate to 3-hydroxy-2-oxo-4-phosphonooxybutanoate. The chain is Erythronate-4-phosphate dehydrogenase from Pseudomonas syringae pv. tomato (strain ATCC BAA-871 / DC3000).